The primary structure comprises 88 residues: Secretion system apparatus protein SsaS (88 aa).

2 helical membrane passes run 15–35 and 55–75; these read WIVLFTSMPVVLVASVVGVIV and LLAIAITLMVSYPWLSGILLN.

It belongs to the FliQ/MopD/SpaQ family.

Its subcellular location is the cell membrane. Part of a type III secretion system. The polypeptide is Secretion system apparatus protein SsaS (ssaS) (Salmonella typhimurium (strain LT2 / SGSC1412 / ATCC 700720)).